The following is a 265-amino-acid chain: Capsule polysaccharide export inner-membrane protein BexB (265 aa).

A run of 6 helical transmembrane segments spans residues 37–57 (IGFL…VMMW), 64–84 (KFST…AMMW), 121–141 (VAGA…IGWI), 148–168 (FYML…GLII), 178–198 (FGKI…AFFF), and 235–255 (ESIG…LVMV). The ABC transmembrane type-2 domain occupies 37 to 258 (IGFLWLFVEP…LMGLVMVKNF (222 aa)).

It belongs to the ABC-2 integral membrane protein family.

The protein localises to the cell inner membrane. Its function is as follows. May form an ATP-driven capsule polysaccharide export apparatus, in association with the BexA, BexC and BexD proteins. This chain is Capsule polysaccharide export inner-membrane protein BexB (bexB), found in Haemophilus influenzae.